The sequence spans 169 residues: Probable phospholipid hydroperoxide glutathione peroxidase (169 aa).

The active site involves Cys43.

The protein belongs to the glutathione peroxidase family.

The protein resides in the cytoplasm. The enzyme catalyses a hydroperoxy polyunsaturated fatty acid + 2 glutathione = a hydroxy polyunsaturated fatty acid + glutathione disulfide + H2O. Functionally, protects cells and enzymes from oxidative damage, by catalyzing the reduction of hydrogen peroxide, lipid peroxides and organic hydroperoxide, by glutathione. The sequence is that of Probable phospholipid hydroperoxide glutathione peroxidase from Nicotiana tabacum (Common tobacco).